Reading from the N-terminus, the 493-residue chain is EGF-containing fibulin-like extracellular matrix protein 1 (493 aa).

Residues 1 to 17 form the signal peptide; that stretch reads MLQTLFLTMLTLALVKS. Residues 26–71 form the EGF-like 1; atypical domain; it reads YTQCTDGYEWDPIRQQCKDIDECDIVPDACKGGMKCVNHYGGYLCL. Residues 173-213 form the EGF-like 2; calcium-binding domain; the sequence is DIDECTSGTHNCRTDQVCINLRGSFTCQCLPGYQKRGEQCV. 15 disulfide bridges follow: Cys177–Cys190, Cys184–Cys199, Cys201–Cys212, Cys218–Cys228, Cys224–Cys237, Cys239–Cys252, Cys258–Cys268, Cys264–Cys277, Cys279–Cys292, Cys298–Cys309, Cys305–Cys318, Cys320–Cys332, Cys338–Cys350, Cys344–Cys359, and Cys365–Cys377. In terms of domain architecture, EGF-like 3; calcium-binding spans 214–253; sequence DIDECTVPPYCHQRCVNTPGSFYCQCSPGFQLAANNYTCV. Asn249 carries an N-linked (GlcNAc...) asparagine glycan. Residues 254-293 form the EGF-like 4; calcium-binding domain; that stretch reads DINECDASNQCAQQCYNILGSFICQCNQGYELSSDRLNCE. Positions 259–493 are mediates interaction with TIMP3; the sequence is DASNQCAQQC…LTIIVGPFSF (235 aa). The region spanning 294 to 333 is the EGF-like 5; calcium-binding domain; sequence DIDECRTSSYLCQYQCVNEPGKFSCMCPQGYEVVRSRTCQ. The 45-residue stretch at 334 to 378 folds into the EGF-like 6; calcium-binding domain; it reads DINECETTNECREDEMCWNYHGGFRCYPRNPCQDHYVLTSENRCV.

This sequence belongs to the fibulin family. As to quaternary structure, interacts with ECM1. Interacts with TIMP3. Expressed in the eye in the ciliary body, cornea, inner nuclear layer of the retina, and in the optic disk.

It is found in the secreted. The protein localises to the extracellular space. Its subcellular location is the extracellular matrix. Functionally, binds EGFR, the EGF receptor, inducing EGFR autophosphorylation and the activation of downstream signaling pathways. May play a role in cell adhesion and migration. May function as a negative regulator of chondrocyte differentiation. In the olfactory epithelium, it may regulate glial cell migration, differentiation and the ability of glial cells to support neuronal neurite outgrowth. The sequence is that of EGF-containing fibulin-like extracellular matrix protein 1 (Efemp1) from Mus musculus (Mouse).